The following is a 465-amino-acid chain: MMKSRFCPSPTGLMHLGNARTALFNYLFAKSKDGIFLLRIEDTDVERSKETFDLGLQEDLRWLNLEWQEGPGADEGNGPYHQSKRQAIYDDYYQRLEEADQAYPCFCSEEQLRLSRKIQRSAGKPPRYAGTCRSLSAAEIEKKKAEGLQPALRFRVPDDEVVVFADLVRGEQRFQTNDIGDFIIRRANGTSPFMFCNAIDDALMGVSHVLRGEDHLTNTPRQLLILQALELPVPTYAHIALIVGPDGSPLSKRHGSRGIKELRDNGYLPLALTNYLARLGHYYASDELLSLAELAKGFNVESLSKSPVKFNAQQLDYWQKQTVNQLPNDDFWEWAGSELQSQIPTDKADLFLTTVKPNVSFPRDVAYWVNVCFGKTLNLETAQSELLRATGNRYFEEAFEAFKKFGKDLNSVVSHLKEKLNLKGKPLYQPLRIALTGAEHGPELAKLILIMDYETIQNRLQEACQ.

The short motif at 8 to 18 (PSPTGLMHLGN) is the 'HIGH' region element. Positions 249-253 (PLSKR) match the 'KMSKS' region motif. Residue K252 coordinates ATP.

The protein belongs to the class-I aminoacyl-tRNA synthetase family. Glutamate--tRNA ligase type 1 subfamily. In terms of assembly, monomer.

The protein resides in the cytoplasm. The enzyme catalyses tRNA(Glu) + L-glutamate + ATP = L-glutamyl-tRNA(Glu) + AMP + diphosphate. Its function is as follows. Catalyzes the attachment of glutamate to tRNA(Glu) in a two-step reaction: glutamate is first activated by ATP to form Glu-AMP and then transferred to the acceptor end of tRNA(Glu). This Coxiella burnetii (strain CbuK_Q154) (Coxiella burnetii (strain Q154)) protein is Glutamate--tRNA ligase 2.